The sequence spans 405 residues: MDHLTMPKFGPLAGLRVVFSGIEIAGPFAGQMFAEWGAEVIWIENVAWADTIRVQPNYPQLSRRNLHALSLNIFKDEGREAFLKLMETTDIFIEASKGPAFARRGITDEVLWQHNPKLVIAHLSGFGQYGTEEYTNLPAYNTIAQAFSGYLIQNGDVDQPMPAFPYTADYFSGLTATTAALAALHKVRETGKGESIDIAMYEVMLRMGQYFMMDYFNGGEMCPRMTKGKDPYYAGCGLYKCADGYIVMELVGITQIAECFKDIGLAHLLGTPEIPEGTQLIHRIECPYGPLVEEKLDAWLAAHTIAEVKERFAELNIACAKVLTVPELESNPQYVARESITQWQTMDGRTCKGPNIMPKFKNNPGQIWRGMPSHGMDTAAILKNIGYSENDIQELVSKGLAKVED.

The CoA site is built by lysine 97 and arginine 104. Catalysis depends on aspartate 169, which acts as the Nucleophile.

The protein belongs to the CoA-transferase III family. CaiB subfamily. In terms of assembly, homodimer.

The protein resides in the cytoplasm. The catalysed reaction is crotonobetainyl-CoA + (R)-carnitine = crotonobetaine + (R)-carnitinyl-CoA. The enzyme catalyses 4-(trimethylamino)butanoyl-CoA + (R)-carnitine = (R)-carnitinyl-CoA + 4-(trimethylamino)butanoate. Its pathway is amine and polyamine metabolism; carnitine metabolism. In terms of biological role, catalyzes the reversible transfer of the CoA moiety from gamma-butyrobetainyl-CoA to L-carnitine to generate L-carnitinyl-CoA and gamma-butyrobetaine. Is also able to catalyze the reversible transfer of the CoA moiety from gamma-butyrobetainyl-CoA or L-carnitinyl-CoA to crotonobetaine to generate crotonobetainyl-CoA. The chain is L-carnitine CoA-transferase from Escherichia coli O127:H6 (strain E2348/69 / EPEC).